The primary structure comprises 241 residues: Fatty acid metabolism regulator protein (241 aa).

An HTH gntR-type domain is found at 6-74 (KGPASFAEKY…HGKPTRVNNF (69 aa)). The H-T-H motif DNA-binding region spans 34-53 (ERELSELIGVTRTTLREVLQ).

In terms of assembly, homodimer.

The protein resides in the cytoplasm. Its function is as follows. Multifunctional regulator of fatty acid metabolism. The protein is Fatty acid metabolism regulator protein of Shewanella sp. (strain MR-4).